A 308-amino-acid polypeptide reads, in one-letter code: UDP-N-acetylenolpyruvoylglucosamine reductase (308 aa).

The FAD-binding PCMH-type domain maps to 35-200 (RVGGPAQVLF…TSARFRGEPM (166 aa)). Arg-180 is a catalytic residue. Residues 211-226 (EVQRHRETAQPVREKT) are compositionally biased toward basic and acidic residues. The tract at residues 211–236 (EVQRHRETAQPVREKTGGSTFKNPPG) is disordered. Ser-229 acts as the Proton donor in catalysis. Glu-299 is a catalytic residue.

It belongs to the MurB family. Requires FAD as cofactor.

The protein localises to the cytoplasm. The catalysed reaction is UDP-N-acetyl-alpha-D-muramate + NADP(+) = UDP-N-acetyl-3-O-(1-carboxyvinyl)-alpha-D-glucosamine + NADPH + H(+). It functions in the pathway cell wall biogenesis; peptidoglycan biosynthesis. Cell wall formation. This is UDP-N-acetylenolpyruvoylglucosamine reductase from Rhodopseudomonas palustris (strain BisB18).